The chain runs to 476 residues: MSPPSDDAGPGPPRTLSLAARLSFAVGHFLNDLCAGMWFTYLLLFLHSVRGYSSRGAGLLLLLGQVADGLCTPLVGYEADRASCVRCGPRKAWHLAGTVCVLLSFPFIFSPCLGCGEATPEWAALLYYGPFIVVFQFGWAATQIAHLSLIPELVTSDHEKVELTALRYAFTVVANITVYGAAWLLLHLQGSAHGEQDISVGDQLGVQDVPVFRNLALLVVGVGAIFSLLFHLGTKEGHRSQHWGNEPNEHTPLVAPAAQPLLLWKHWLREPAFYQVGMLYMTTRLIVNLSQTYIAMYLTYSLSLPKKFIATIPLVMYLSGFFSSFLMKPVNRRIGRNMTYFTGLLVILAFAAWVALADNLGVAVYGAAVLLGAGCATILVTSLAMTADLIGPHTHSGAFVYGAMSFSDKVANGLAVMAVQSLHPCPSELCCGACISFYHWVMTAVTGGVGVAAALALCSLLIWPIRIRNRDPRDRP.

Met1 bears the N-acetylmethionine mark. Residues 1–25 are Cytoplasmic-facing; that stretch reads MSPPSDDAGPGPPRTLSLAARLSFA. Residues 26–46 form a helical membrane-spanning segment; sequence VGHFLNDLCAGMWFTYLLLFL. Topologically, residues 47–55 are lumenal; that stretch reads HSVRGYSSR. The chain crosses the membrane as a helical span at residues 56-76; that stretch reads GAGLLLLLGQVADGLCTPLVG. The Cytoplasmic portion of the chain corresponds to 77–94; sequence YEADRASCVRCGPRKAWH. The helical transmembrane segment at 95 to 115 threads the bilayer; it reads LAGTVCVLLSFPFIFSPCLGC. Residues 116-121 are Lumenal-facing; the sequence is GEATPE. A helical transmembrane segment spans residues 122-142; sequence WAALLYYGPFIVVFQFGWAAT. Residues 143–167 are Cytoplasmic-facing; it reads QIAHLSLIPELVTSDHEKVELTALR. A helical membrane pass occupies residues 168–188; the sequence is YAFTVVANITVYGAAWLLLHL. Topologically, residues 189–213 are lumenal; the sequence is QGSAHGEQDISVGDQLGVQDVPVFR. The chain crosses the membrane as a helical span at residues 214 to 234; the sequence is NLALLVVGVGAIFSLLFHLGT. Residues 235-284 lie on the Cytoplasmic side of the membrane; that stretch reads KEGHRSQHWGNEPNEHTPLVAPAAQPLLLWKHWLREPAFYQVGMLYMTTR. Thr251 carries the post-translational modification Phosphothreonine. Residues 285-305 form a helical membrane-spanning segment; that stretch reads LIVNLSQTYIAMYLTYSLSLP. A topological domain (lumenal) is located at residue Lys306. Residues 307 to 327 form a helical membrane-spanning segment; the sequence is KFIATIPLVMYLSGFFSSFLM. The Cytoplasmic segment spans residues 328 to 343; the sequence is KPVNRRIGRNMTYFTG. Transmembrane regions (helical) follow at residues 344-364 and 365-385; these read LLVI…GVAV and YGAA…SLAM. Topologically, residues 386–398 are cytoplasmic; it reads TADLIGPHTHSGA. A helical transmembrane segment spans residues 399 to 419; sequence FVYGAMSFSDKVANGLAVMAV. Residues 420–444 are Lumenal-facing; the sequence is QSLHPCPSELCCGACISFYHWVMTA. A helical transmembrane segment spans residues 445 to 465; it reads VTGGVGVAAALALCSLLIWPI. The Cytoplasmic segment spans residues 466 to 476; the sequence is RIRNRDPRDRP.

This sequence belongs to the major facilitator superfamily. Phosphorylation at Thr-251 by MTOR via mTORC1 pathway promotes cysteine transport in lysosomes, thereby regulating lysosomal cysteine and cystine storage and redox homeostasis.

It localises to the melanosome membrane. Its subcellular location is the lysosome membrane. It carries out the reaction L-cysteine(in) = L-cysteine(out). In terms of biological role, transporter that mediates the import of cysteine into melanosomes, thereby regulating skin/hair pigmentation. In melanosomes, cysteine import is required both for normal levels of cystine, the oxidized dimer of cysteine, and provide cysteine for the production of the cysteinyldopas used in pheomelanin synthesis, thereby regulating skin/hair pigmentation. Also catalyzes import of cysteine into lysosomes in non-pigmented cells, regulating lysosomal cystine and cysteine storage, which is essnetial for redox homeostasis. The chain is Major facilitator superfamily domain-containing protein 12 from Mus musculus (Mouse).